A 92-amino-acid chain; its full sequence is PqqA binding protein (92 aa).

It belongs to the PqqD family. In terms of assembly, monomer. Interacts with PqqE.

It functions in the pathway cofactor biosynthesis; pyrroloquinoline quinone biosynthesis. Functionally, functions as a PqqA binding protein and presents PqqA to PqqE, in the pyrroloquinoline quinone (PQQ) biosynthetic pathway. The chain is PqqA binding protein from Pseudomonas paraeruginosa (strain DSM 24068 / PA7) (Pseudomonas aeruginosa (strain PA7)).